Reading from the N-terminus, the 429-residue chain is Glutamate-1-semialdehyde 2,1-aminomutase (429 aa).

At K267 the chain carries N6-(pyridoxal phosphate)lysine.

This sequence belongs to the class-III pyridoxal-phosphate-dependent aminotransferase family. HemL subfamily. In terms of assembly, homodimer. Pyridoxal 5'-phosphate serves as cofactor.

The protein localises to the cytoplasm. The enzyme catalyses (S)-4-amino-5-oxopentanoate = 5-aminolevulinate. Its pathway is porphyrin-containing compound metabolism; protoporphyrin-IX biosynthesis; 5-aminolevulinate from L-glutamyl-tRNA(Glu): step 2/2. In Xanthomonas euvesicatoria pv. vesicatoria (strain 85-10) (Xanthomonas campestris pv. vesicatoria), this protein is Glutamate-1-semialdehyde 2,1-aminomutase.